The following is a 460-amino-acid chain: DL-alanine permease SerP2 (460 aa).

12 helical membrane passes run 26–46 (LIAIAGTIGTGLFLGAGKSIH), 47–67 (LTGPSIIFVYLIIGALMYILL), 98–118 (FIQWSYLLVVVFVAMAELIAI), 124–144 (FWLPDLPIWMTEVFVLVLLTL), 160–180 (FGMIKIVAIIGLILTAIILIF), 209–229 (FFESFQMVMFAFVSMEFIGMT), 246–266 (QIPIRIVLFYIGALLAIMSIY), 278–298 (FVTIFQLIGIKWAAALVNFVV), 344–364 (ALLFTSLLILFTPFISMIPAI), 368–388 (FVFITSVATNLFLVVYLMTLI), 410–430 (HIFIPLAIAGFVLIFISLFCF), and 433–453 (TIIPAIGSVIWVLIFGLFTFF).

It belongs to the amino acid-polyamine-organocation (APC) superfamily. Amino acid transporter (AAT) (TC 2.A.3.1) family.

The protein resides in the cell membrane. In terms of biological role, transports DL-alanine, DL-serine and glycine. The preferred substrate is DL-alanine. L-serine is a low-affinity substrate. This Lactococcus lactis subsp. cremoris (strain MG1363) protein is DL-alanine permease SerP2.